We begin with the raw amino-acid sequence, 37 residues long: U12-myrmicitoxin-Mri1a (37 aa).

A signal peptide spans 1 to 23 (MKTIELITIFAMITTLMVTVVAG). Residues 24-25 (DP) constitute a propeptide that is removed on maturation. Valine amide is present on Val-35.

As to expression, expressed by the venom gland.

It is found in the secreted. In terms of biological role, toxin that induces mild paralysis, and reduces survival and reproduction when injected into aphids (A.pisum). May affect various processes in the aphid, including wound healing and hemolymph coagulation. It does not increase the sensitivity of the aphids to the chemical insecticides imidacloprid, methomyl and Spirotetramat. Has no insecticidal activity when injected into blowfly (L.caesar). Does not display any antibacterial or antifungal activity. The protein is U12-myrmicitoxin-Mri1a of Manica rubida (European giant red ant).